The primary structure comprises 378 residues: MAKKDYYQILGIPKSAEEREIKKAYKRLAMKYHPDRNQGDKNAENKFKEIKEAYEILINEEKRTAYDQYGHAAFENGYNQNNTYSTFTSSTDFGDIFGDVFGDIFGGSRNQRVKKGADLCYNMEISLEEAVKGTTKEIRIPTFQKCKTCYGMGTSTGTKPNGCSTCHGKGQIHIRKGFFTVQQSCPTCNGIGTVIKNPCRMCRGQGRIKTNKTLSVKIPPGIDTNDKIRLSKEGEAGTNGAQPGDLYVQMKVNKHPIFEREENNLYCEVPINFTMAALGGEIEVPTLDGRVNLKIPSETQSGKLFRIRGKGVKSVQSRSRGDLLCRVVVETPVNLNEKQKYLLSELGNSFNGFRGDKNSPRSKRFFDGVKRFFDDLTK.

A J domain is found at 5-70; sequence DYYQILGIPK…EKRTAYDQYG (66 aa). The CR-type zinc finger occupies 133-211; it reads GTTKEIRIPT…CRGQGRIKTN (79 aa). Residues Cys146, Cys149, Cys163, Cys166, Cys185, Cys188, Cys199, and Cys202 each coordinate Zn(2+). 4 CXXCXGXG motif repeats span residues 146–153, 163–170, 185–192, and 199–206; these read CKTCYGMG, CSTCHGKG, CPTCNGIG, and CRMCRGQG.

This sequence belongs to the DnaJ family. As to quaternary structure, homodimer. The cofactor is Zn(2+).

The protein localises to the cytoplasm. Its function is as follows. Participates actively in the response to hyperosmotic and heat shock by preventing the aggregation of stress-denatured proteins and by disaggregating proteins, also in an autonomous, DnaK-independent fashion. Unfolded proteins bind initially to DnaJ; upon interaction with the DnaJ-bound protein, DnaK hydrolyzes its bound ATP, resulting in the formation of a stable complex. GrpE releases ADP from DnaK; ATP binding to DnaK triggers the release of the substrate protein, thus completing the reaction cycle. Several rounds of ATP-dependent interactions between DnaJ, DnaK and GrpE are required for fully efficient folding. Also involved, together with DnaK and GrpE, in the DNA replication of plasmids through activation of initiation proteins. The polypeptide is Chaperone protein DnaJ (Buchnera aphidicola subsp. Schizaphis graminum (strain Sg)).